We begin with the raw amino-acid sequence, 324 residues long: BURP domain-containing protein 5 (324 aa).

Residues 1 to 30 (MCATLCTLLDEISILILMLLLIQLEIRVSA) form the signal peptide. Residues 109–323 (FFLETNLQSS…QPDVVVWTRR (215 aa)) form the BURP domain.

In terms of tissue distribution, expressed in panicles.

The sequence is that of BURP domain-containing protein 5 (BURP5) from Oryza sativa subsp. japonica (Rice).